The following is a 348-amino-acid chain: Dihydroorotase (348 aa).

2 residues coordinate Zn(2+): histidine 13 and histidine 15. Substrate-binding positions include 15–17 and asparagine 41; that span reads HLR. Residues lysine 99, histidine 136, and histidine 174 each contribute to the Zn(2+) site. Lysine 99 carries the post-translational modification N6-carboxylysine. Residue histidine 136 coordinates substrate. Leucine 219 is a binding site for substrate. Residue aspartate 247 participates in Zn(2+) binding. Aspartate 247 is an active-site residue. Substrate-binding residues include histidine 251 and alanine 263.

Belongs to the metallo-dependent hydrolases superfamily. DHOase family. Class II DHOase subfamily. Homodimer. Zn(2+) is required as a cofactor.

It carries out the reaction (S)-dihydroorotate + H2O = N-carbamoyl-L-aspartate + H(+). Its pathway is pyrimidine metabolism; UMP biosynthesis via de novo pathway; (S)-dihydroorotate from bicarbonate: step 3/3. Catalyzes the reversible cyclization of carbamoyl aspartate to dihydroorotate. The chain is Dihydroorotase from Rhizobium etli (strain ATCC 51251 / DSM 11541 / JCM 21823 / NBRC 15573 / CFN 42).